The sequence spans 154 residues: Peptide methionine sulfoxide reductase MsrB (154 aa).

The region spanning 28–150 (DQQWREQLSE…NSVSLIFNKI (123 aa)) is the MsrB domain. The Zn(2+) site is built by Cys-67, Cys-70, Cys-116, and Cys-119. The active-site Nucleophile is the Cys-139.

It belongs to the MsrB Met sulfoxide reductase family. It depends on Zn(2+) as a cofactor.

The catalysed reaction is L-methionyl-[protein] + [thioredoxin]-disulfide + H2O = L-methionyl-(R)-S-oxide-[protein] + [thioredoxin]-dithiol. In Vibrio vulnificus (strain CMCP6), this protein is Peptide methionine sulfoxide reductase MsrB.